The sequence spans 149 residues: Large ribosomal subunit protein bL9 (149 aa).

This sequence belongs to the bacterial ribosomal protein bL9 family.

In terms of biological role, binds to the 23S rRNA. This is Large ribosomal subunit protein bL9 from Aliivibrio fischeri (strain ATCC 700601 / ES114) (Vibrio fischeri).